The primary structure comprises 429 residues: MATLSFVFLLLGAVSWPPASASGQEFWPGQSAADILSGAASRRRYLLYDVNPPEGFNLRRDVYIRIASLLKTLLKTEEWVLVLPPWGRLYHWQSPDIHQVRIPWSEFFDLPSLNKNIPVIEYEQFIAESGGPFIDQVYVLQSYAEGWKEGTWEEKVDERPCIDQLLYSQDKHEYYRGWFWGYEETRGLNVSCLSVQGSASIVAPLLLRNTSARSVMLDRAENLLHDHYGGKEYWDTRRSMVFARHLREVGDEFRSRHLNSTDDADRIPFQEDWMKMKVKLGSALGGPYLGVHLRRKDFIWGHRQDVPSLEGAVRKIRSLMKTHRLDKVFVATDAVRKEYEELKKLLPEMVRFEPTWEELELYKDGGVAIIDQWICAHARFFIGTSVSTFSFRIHEEREILGLDPKTTYNRFCGDQEKACEQPTHWKITY.

Positions 1 to 21 (MATLSFVFLLLGAVSWPPASA) are cleaved as a signal peptide. 53–57 (PEGFN) lines the GDP-beta-L-fucose pocket. The active-site Proton acceptor is E54. C161 and C192 are disulfide-bonded. N-linked (GlcNAc...) asparagine glycans are attached at residues N189, N209, and N259. GDP-beta-L-fucose contacts are provided by residues 292-294 (HLR), D371, and 388-389 (TF). A disulfide bond links C412 and C419.

This sequence belongs to the glycosyltransferase 68 family. In terms of tissue distribution, isoform A is expressed in fetal liver and peripheral blood lymphocytes. Isoform B is expressed in spleen, lung, testis, bone marrow, thymus, pancreas, prostate, fetal brain, fetal liver and fetal kidney. Isoform C is expressed in brain, heart, spleen, liver, lung, stomach, testis, placenta, skin, thymus, pancreas, mammary gland, prostate, fetal brain, fetal liver and fetal heart.

Its subcellular location is the endoplasmic reticulum. The protein resides in the golgi apparatus. It carries out the reaction L-seryl-[protein] + GDP-beta-L-fucose = 3-O-(alpha-L-fucosyl)-L-seryl-[protein] + GDP + H(+). It catalyses the reaction L-threonyl-[protein] + GDP-beta-L-fucose = 3-O-(alpha-L-fucosyl)-L-threonyl-[protein] + GDP + H(+). It functions in the pathway protein modification; protein glycosylation. With respect to regulation, inhibited by EDTA and by Zn(2+). Functionally, catalyzes the reaction that attaches fucose through an O-glycosidic linkage to a conserved serine or threonine residue in the consensus sequence C1-X-X-S/T-C2 of thrombospondin type I repeats (TSRs) where C1 and C2 are the first and second cysteines of the repeat, respectively. O-fucosylates members of several protein families including the ADAMTS, the thrombospondin (TSP) and spondin families. Required for the proper secretion of ADAMTS family members such as ADAMTSL1 and ADAMTS13. The O-fucosylation of TSRs is also required for restricting epithelial to mesenchymal transition (EMT), maintaining the correct patterning of mesoderm and localization of the definite endoderm. This Homo sapiens (Human) protein is GDP-fucose protein O-fucosyltransferase 2 (POFUT2).